The primary structure comprises 292 residues: Elongation factor Ts (292 aa).

Positions 82–85 (TDFV) are involved in Mg(2+) ion dislocation from EF-Tu.

It belongs to the EF-Ts family.

The protein localises to the cytoplasm. Functionally, associates with the EF-Tu.GDP complex and induces the exchange of GDP to GTP. It remains bound to the aminoacyl-tRNA.EF-Tu.GTP complex up to the GTP hydrolysis stage on the ribosome. The sequence is that of Elongation factor Ts from Legionella pneumophila (strain Lens).